The chain runs to 377 residues: DAR GTPase 2, mitochondrial (377 aa).

The N-terminal 21 residues, 1–21, are a transit peptide targeting the mitochondrion; the sequence is MATAKTWKIAREIGDAVIKAS. A CP-type G domain is found at 34–211; sequence AAAVRAISER…VLDTPGIFPP (178 aa). The DARXP motif signature appears at 55–59; the sequence is DARIP. Residues 82 to 85, 110 to 111, 150 to 155, and Gly207 each bind GTP; these read NKME, NS, and NVGKSA.

It belongs to the TRAFAC class YlqF/YawG GTPase family. MTG1 subfamily.

The protein localises to the mitochondrion. Its function is as follows. GTPase that may function in mitochondrial ribosome assembly. The chain is DAR GTPase 2, mitochondrial from Arabidopsis thaliana (Mouse-ear cress).